The primary structure comprises 404 residues: Snake venom metalloproteinase H5 (404 aa).

The signal sequence occupies residues F1–S6. Positions S7 to K177 are excised as a propeptide. One can recognise a Peptidase M12B domain in the interval T184–S379. 3 cysteine pairs are disulfide-bonded: C295–C374, C336–C358, and C338–C341. Zn(2+) is bound at residue H320. The active site involves E321. Zn(2+) is bound by residues H324 and H330. Residues S379–A404 constitute a propeptide that is removed on maturation. The segment at V385–A404 is disordered. The span at P394 to A404 shows a compositional bias: acidic residues.

As to quaternary structure, monomer. It depends on Zn(2+) as a cofactor. In terms of tissue distribution, expressed by the venom gland.

It localises to the secreted. Functionally, this probable venom zinc protease is not hemorrhagic when 3 ug are injected onto the back skin of guinea pig. This chain is Snake venom metalloproteinase H5, found in Deinagkistrodon acutus (Hundred-pace snake).